A 209-amino-acid chain; its full sequence is Probable calcium-binding protein CML36 (209 aa).

The interval 22–59 is disordered; sequence SKSPTAFSFGSASSSSGQDCKNSGGDGGGGSVTPTSIL. Low complexity predominate over residues 27–38; sequence AFSFGSASSSSG. 4 consecutive EF-hand domains span residues 66–101, 103–138, 139–174, and 176–209; these read YSYV…LGPD, LTEE…LDPA, RDST…IGDE, and CTLD…DLQR. D79, D81, D83, and D90 together coordinate Ca(2+). Ca(2+) is bound by residues D152, D154, D156, E163, D189, D191, D193, and E200.

Potential calcium sensor. The polypeptide is Probable calcium-binding protein CML36 (CML36) (Arabidopsis thaliana (Mouse-ear cress)).